The primary structure comprises 130 residues: Small ribosomal subunit protein uS9 (130 aa).

The disordered stretch occupies residues 110–130 (AKERKKYGRKGARARFQFSKR). Residues 111-130 (KERKKYGRKGARARFQFSKR) show a composition bias toward basic residues.

It belongs to the universal ribosomal protein uS9 family.

The protein is Small ribosomal subunit protein uS9 of Syntrophotalea carbinolica (strain DSM 2380 / NBRC 103641 / GraBd1) (Pelobacter carbinolicus).